Reading from the N-terminus, the 475-residue chain is Aspartyl/glutamyl-tRNA(Asn/Gln) amidotransferase subunit B (475 aa).

The protein belongs to the GatB/GatE family. GatB subfamily. As to quaternary structure, heterotrimer of A, B and C subunits.

The enzyme catalyses L-glutamyl-tRNA(Gln) + L-glutamine + ATP + H2O = L-glutaminyl-tRNA(Gln) + L-glutamate + ADP + phosphate + H(+). It catalyses the reaction L-aspartyl-tRNA(Asn) + L-glutamine + ATP + H2O = L-asparaginyl-tRNA(Asn) + L-glutamate + ADP + phosphate + 2 H(+). In terms of biological role, allows the formation of correctly charged Asn-tRNA(Asn) or Gln-tRNA(Gln) through the transamidation of misacylated Asp-tRNA(Asn) or Glu-tRNA(Gln) in organisms which lack either or both of asparaginyl-tRNA or glutaminyl-tRNA synthetases. The reaction takes place in the presence of glutamine and ATP through an activated phospho-Asp-tRNA(Asn) or phospho-Glu-tRNA(Gln). In Chlorobium phaeobacteroides (strain DSM 266 / SMG 266 / 2430), this protein is Aspartyl/glutamyl-tRNA(Asn/Gln) amidotransferase subunit B.